We begin with the raw amino-acid sequence, 327 residues long: ATP-dependent 6-phosphofructokinase (327 aa).

Gly-12 contacts ATP. Residues 22–26 and 55–60 contribute to the ADP site; these read RGVVR and RYSVSD. Residues 73–74 and 103–106 contribute to the ATP site; these read RF and GDGS. Residue Asp-104 coordinates Mg(2+). 127–129 is a binding site for substrate; the sequence is TID. Asp-129 serves as the catalytic Proton acceptor. An ADP-binding site is contributed by Arg-156. Substrate-binding positions include Arg-164 and 171-173; that span reads MGR. ADP-binding positions include 187–189, Lys-213, and 215–217; these read GCE and KKH. Residues Glu-224, Arg-245, and 251-254 contribute to the substrate site; that span reads HIQR.

It belongs to the phosphofructokinase type A (PFKA) family. ATP-dependent PFK group I subfamily. Prokaryotic clade 'B1' sub-subfamily. As to quaternary structure, homotetramer. Mg(2+) serves as cofactor.

Its subcellular location is the cytoplasm. It carries out the reaction beta-D-fructose 6-phosphate + ATP = beta-D-fructose 1,6-bisphosphate + ADP + H(+). It functions in the pathway carbohydrate degradation; glycolysis; D-glyceraldehyde 3-phosphate and glycerone phosphate from D-glucose: step 3/4. Allosterically activated by ADP and other diphosphonucleosides, and allosterically inhibited by phosphoenolpyruvate. Catalyzes the phosphorylation of D-fructose 6-phosphate to fructose 1,6-bisphosphate by ATP, the first committing step of glycolysis. The protein is ATP-dependent 6-phosphofructokinase of Hamiltonella defensa subsp. Acyrthosiphon pisum (strain 5AT).